Consider the following 410-residue polypeptide: Peptidase T (410 aa).

Residue His79 coordinates Zn(2+). The active site involves Asp81. Asp142 contacts Zn(2+). Catalysis depends on Glu176, which acts as the Proton acceptor. Glu177, Asp199, and His381 together coordinate Zn(2+).

This sequence belongs to the peptidase M20B family. Zn(2+) is required as a cofactor.

It localises to the cytoplasm. It catalyses the reaction Release of the N-terminal residue from a tripeptide.. Functionally, cleaves the N-terminal amino acid of tripeptides. The polypeptide is Peptidase T (Bacillus thuringiensis (strain Al Hakam)).